We begin with the raw amino-acid sequence, 851 residues long: Oligopeptide transport ATP-binding protein OppF (851 aa).

Positions valine 14 to isoleucine 788 constitute an ABC transporter domain. Glycine 48–serine 55 is a binding site for ATP.

The protein belongs to the ABC transporter superfamily. The complex is composed of two ATP-binding proteins (OppD and OppF), two transmembrane proteins (OppB and OppC) and a solute-binding protein (OppA).

Its subcellular location is the cell membrane. The enzyme catalyses a [peptide](out) + ATP + H2O = a [peptide](in) + ADP + phosphate + H(+). In terms of biological role, part of the ABC transporter complex OppABCDF involved in the uptake of oligopeptides. Probably responsible for energy coupling to the transport system. This chain is Oligopeptide transport ATP-binding protein OppF (oppF), found in Mycoplasma pneumoniae (strain ATCC 29342 / M129 / Subtype 1) (Mycoplasmoides pneumoniae).